A 597-amino-acid chain; its full sequence is Aspartate--tRNA(Asp/Asn) ligase (597 aa).

Position 170 (Glu170) interacts with L-aspartate. An aspartate region spans residues 194–197 (QLFK). An L-aspartate-binding site is contributed by Arg216. ATP is bound by residues 216 to 218 (RDE) and Gln225. Position 448 (His448) interacts with L-aspartate. Glu482 lines the ATP pocket. Residue Arg489 coordinates L-aspartate. 534-537 (GWDR) provides a ligand contact to ATP. Positions 558-597 (GGGVDPLTDAPAPITAAQRKESGIDAKPEKAEKAGKPADA) are disordered. Basic and acidic residues predominate over residues 575-597 (QRKESGIDAKPEKAEKAGKPADA).

This sequence belongs to the class-II aminoacyl-tRNA synthetase family. Type 1 subfamily. Homodimer.

The protein localises to the cytoplasm. It carries out the reaction tRNA(Asx) + L-aspartate + ATP = L-aspartyl-tRNA(Asx) + AMP + diphosphate. Aspartyl-tRNA synthetase with relaxed tRNA specificity since it is able to aspartylate not only its cognate tRNA(Asp) but also tRNA(Asn). Reaction proceeds in two steps: L-aspartate is first activated by ATP to form Asp-AMP and then transferred to the acceptor end of tRNA(Asp/Asn). The polypeptide is Aspartate--tRNA(Asp/Asn) ligase (Mycobacteroides abscessus (strain ATCC 19977 / DSM 44196 / CCUG 20993 / CIP 104536 / JCM 13569 / NCTC 13031 / TMC 1543 / L948) (Mycobacterium abscessus)).